Here is a 596-residue protein sequence, read N- to C-terminus: MKSKTFLEKNFINVQAYKYNGDLYRQWNGSKIIKNDSQNIILYNFHSRIMEKSGKSWQVSEPSLWIFPKNENYNVNVLLRPEGNYYYINLTSPFIFEDNTIKYIDFDIDIKVYPKKEIEIVDIKEFQKNIKDYGYPPSVRKMVYKQVQNLLMFYEKQTSFFHRDFIDNIVNSLAKNKMLVFQSKKLSNFSQRYFEELRKNTKNEKIFKVYLCGPTVYDEVHIGNMRSVVVVDLIVRAQKYLGKKTLFVHNITDIDDKIIERSIQSKISENKISEKYFREYKKVLKKYRIKSIDKMPKVTDNIDSIVKFINSLDKKGYVIQKDDGFVFDVSKIKNYGKRLSREDKKQVENFYLWKSTTKGVQYNYNGFLGRPGWHSECTLFIDDIFNSQTLDIHAGGIDLTFPHHENENAQYIAKNDVKITKHWLHVGQVMFKNQKMSKSLGNVILAKDFDEDIFKIILINSSVTAPIYITNELIENAKVIINKYKKLYFKFLNLSLSFNFDDNVRYMVRKIADKDFSSFNLKLNEYIKAYNTSLEADKLTIVSSVIHFLNFSFIEQIEKDFRKNKKIYDIWQGFLKQKNYEKADMFRKILIDQGLI.

The interval 1-199 (MKSKTFLEKN…SQRYFEELRK (199 aa)) is unknown. Cys-212 provides a ligand contact to Zn(2+). Positions 214-224 (PTVYDEVHIGN) match the 'HIGH' region motif. The Zn(2+) site is built by Cys-377, His-403, and Glu-407. Residues 435–439 (KMSKS) carry the 'KMSKS' region motif. An ATP-binding site is contributed by Lys-438.

Belongs to the class-I aminoacyl-tRNA synthetase family. As to quaternary structure, monomer. Zn(2+) serves as cofactor.

The protein localises to the cytoplasm. It catalyses the reaction tRNA(Cys) + L-cysteine + ATP = L-cysteinyl-tRNA(Cys) + AMP + diphosphate. The polypeptide is Cysteine--tRNA ligase (cysS) (Mycoplasmopsis pulmonis (strain UAB CTIP) (Mycoplasma pulmonis)).